Reading from the N-terminus, the 175-residue chain is Nudix hydrolase 25 (175 aa).

Residues 7-155 (GYRPNVGVCL…KRPTYEEVIK (149 aa)) form the Nudix hydrolase domain. Gly40, Glu55, and Glu59 together coordinate Mn(2+). Positions 40-61 (GGIEDGEDPKSAAMRELQEETG) match the Nudix box motif.

Belongs to the Nudix hydrolase family. It depends on Mn(2+) as a cofactor.

It carries out the reaction P(1),P(4)-bis(5'-guanosyl) tetraphosphate + H2O = GMP + GTP + 2 H(+). Functionally, mediates the hydrolysis of diadenosine 5',5''-P(1)P(4) tetraphosphate (Ap(4)A), a signaling molecule involved in regulation of DNA replication and repair. This is Nudix hydrolase 25 from Arabidopsis thaliana (Mouse-ear cress).